A 314-amino-acid polypeptide reads, in one-letter code: uncharacterized protein (314 aa).

Helical transmembrane passes span 4-23, 36-53, 68-90, 97-116, 131-153, 174-196, 200-222, 229-251, 261-283, and 290-309; these read FFIG…YFSG, FNKL…FVSI, TLVS…YKFF, AAVC…GFAV, VAII…LNPS, PVVW…PAAW, FNLI…LAAH, EIAY…VGMA, MMVL…RFNV, and ASLA…WIYV.

This sequence belongs to the auxin efflux carrier (TC 2.A.69) family.

It localises to the cell membrane. This is an uncharacterized protein from Escherichia coli O157:H7.